The primary structure comprises 1207 residues: DNA-directed RNA polymerase subunit beta (1207 aa).

The protein belongs to the RNA polymerase beta chain family. As to quaternary structure, the RNAP catalytic core consists of 2 alpha, 1 beta, 1 beta' and 1 omega subunit. When a sigma factor is associated with the core the holoenzyme is formed, which can initiate transcription.

It catalyses the reaction RNA(n) + a ribonucleoside 5'-triphosphate = RNA(n+1) + diphosphate. DNA-dependent RNA polymerase catalyzes the transcription of DNA into RNA using the four ribonucleoside triphosphates as substrates. The chain is DNA-directed RNA polymerase subunit beta from Enterococcus faecalis (strain ATCC 700802 / V583).